A 525-amino-acid chain; its full sequence is Cytochrome P450 4V2 (525 aa).

A helical membrane pass occupies residues 13-33; that stretch reads LLLWGAASALSLAGASLVLSL. Positions 329 and 467 each coordinate heme.

Belongs to the cytochrome P450 family. The cofactor is heme. Broadly expressed. Detected in heart, brain, placenta, lung, liver, skeletal muscle, kidney, pancreas, retina, retinal pigment epithelium (RPE) and lymphocytes.

It is found in the endoplasmic reticulum membrane. It carries out the reaction dodecanoate + reduced [NADPH--hemoprotein reductase] + O2 = 12-hydroxydodecanoate + oxidized [NADPH--hemoprotein reductase] + H2O + H(+). The catalysed reaction is tetradecanoate + reduced [NADPH--hemoprotein reductase] + O2 = 14-hydroxytetradecanoate + oxidized [NADPH--hemoprotein reductase] + H2O + H(+). It catalyses the reaction hexadecanoate + reduced [NADPH--hemoprotein reductase] + O2 = 16-hydroxyhexadecanoate + oxidized [NADPH--hemoprotein reductase] + H2O + H(+). The enzyme catalyses (5Z,8Z,11Z,14Z,17Z)-eicosapentaenoate + reduced [NADPH--hemoprotein reductase] + O2 = 20-hydroxy-(5Z,8Z,11Z,14Z,17Z)-eicosapentaenoate + oxidized [NADPH--hemoprotein reductase] + H2O + H(+). It carries out the reaction (4Z,7Z,10Z,13Z,16Z,19Z)-docosahexaenoate + reduced [NADPH--hemoprotein reductase] + O2 = 22-hydroxy-(4Z,7Z,10Z,13Z,16Z,19Z)-docosahexaenoate + oxidized [NADPH--hemoprotein reductase] + H2O + H(+). It participates in lipid metabolism; fatty acid metabolism. Its activity is regulated as follows. Inhibited by N-hydroxy-N'-(4-n-butyl-2-methylphenyl formamidine)(HET0016) with an IC(50) of 38 nM. A cytochrome P450 monooxygenase involved in fatty acid metabolism in the eye. Catalyzes the omega-hydroxylation of polyunsaturated fatty acids (PUFAs) docosahexaenoate (DHA) and its precursor eicosapentaenoate (EPA), and may contribute to the homeostasis of these retinal PUFAs. Omega hydroxylates saturated fatty acids such as laurate, myristate and palmitate, the catalytic efficiency decreasing in the following order: myristate &gt; laurate &gt; palmitate (C14&gt;C12&gt;C16). Mechanistically, uses molecular oxygen inserting one oxygen atom into a substrate, and reducing the second into a water molecule, with two electrons provided by NADPH via cytochrome P450 reductase (CPR; NADPH-ferrihemoprotein reductase). In Homo sapiens (Human), this protein is Cytochrome P450 4V2 (CYP4V2).